A 460-amino-acid polypeptide reads, in one-letter code: 5-hydroxytryptamine receptor 2C (460 aa).

The N-terminal stretch at 1–32 is a signal peptide; that stretch reads MVNLGNAVRSLLMHLIGLLVWQFDISISPVAA. Topologically, residues 33–56 are extracellular; sequence IVTDTFNSSDGGRLFQFPDGVQNW. A helical membrane pass occupies residues 57-81; it reads PALSIVVIIIMTIGGNILVIMAVSM. Topologically, residues 82–87 are cytoplasmic; the sequence is EKKLHN. Residues 88 to 112 traverse the membrane as a helical segment; the sequence is ATNYFLMSLAIADMLVGLLVMPLSL. Topologically, residues 113-129 are extracellular; it reads LAILYDYVWPLPRYLCP. Cys-128 and Cys-208 form a disulfide bridge. A helical membrane pass occupies residues 130-152; the sequence is VWISLDVLFSTASIMHLCAISLD. Ergotamine is bound at residue Thr-140. Residues 152-154 carry the DRY motif; important for ligand-induced conformation changes motif; that stretch reads DRY. The Cytoplasmic segment spans residues 153–168; it reads RYVAIRNPIEHSRFNS. Residues 169 to 190 form a helical membrane-spanning segment; sequence RTKAIMKIAIVWAISIGVSVPI. The Extracellular portion of the chain corresponds to 191 to 214; it reads PVIGLRDESKVFVNNTTCVLNDPN. Asn-204 and Asn-205 each carry an N-linked (GlcNAc...) asparagine glycan. Ergotamine is bound at residue Leu-210. Residues 215 to 237 traverse the membrane as a helical segment; the sequence is FVLIGSFVAFFIPLTIMVITYFL. Over 238 to 313 the chain is Cytoplasmic; the sequence is TIYVLRRQTL…AINNEKKASK (76 aa). The interval 276 to 301 is disordered; the sequence is EEENAPNPNPDQKPRRKKKEKRPRGT. Residues 289-299 show a composition bias toward basic residues; that stretch reads PRRKKKEKRPR. The helical transmembrane segment at 314-338 threads the bilayer; it reads VLGIVFFVFLIMWCPFFITNILSVL. A disulfide bridge links Cys-339 with Cys-343. Topologically, residues 339-349 are extracellular; the sequence is CGKACNQKLME. A helical membrane pass occupies residues 350 to 372; sequence KLLNVFVWIGYVCSGINPLVYTL. Residues 366-370 carry the NPxxY motif; important for ligand-induced conformation changes and signaling motif; sequence NPLVY. The Cytoplasmic segment spans residues 373-460; it reads FNKIYRRAFS…NVVSERISSV (88 aa). Residues 458-460 carry the PDZ-binding motif; it reads SSV.

This sequence belongs to the G-protein coupled receptor 1 family. Interacts with MPDZ. Interacts with ARRB2. Interacts with MPP3; this interaction stabilizes the receptor at the plasma membrane and prevents the desensitization of the HTR2C receptor-mediated calcium response.

The protein localises to the cell membrane. In terms of biological role, G-protein coupled receptor for 5-hydroxytryptamine (serotonin). Also functions as a receptor for various drugs and psychoactive substances, including ergot alkaloid derivatives, 1-2,5,-dimethoxy-4-iodophenyl-2-aminopropane (DOI) and lysergic acid diethylamide (LSD). Ligand binding causes a conformation change that triggers signaling via guanine nucleotide-binding proteins (G proteins) and modulates the activity of downstream effectors. HTR2C is coupled to G(q)/G(11) G alpha proteins and activates phospholipase C-beta, releasing diacylglycerol (DAG) and inositol 1,4,5-trisphosphate (IP3) second messengers that modulate the activity of phosphatidylinositol 3-kinase and promote the release of Ca(2+) ions from intracellular stores, respectively. Beta-arrestin family members inhibit signaling via G proteins and mediate activation of alternative signaling pathways. Regulates neuronal activity via the activation of short transient receptor potential calcium channels in the brain, and thereby modulates the activation of pro-opiomelanocortin neurons and the release of CRH that then regulates the release of corticosterone. Plays a role in the regulation of appetite and eating behavior, responses to anxiogenic stimuli and stress. Plays a role in insulin sensitivity and glucose homeostasis. The polypeptide is 5-hydroxytryptamine receptor 2C (Rattus norvegicus (Rat)).